A 595-amino-acid chain; its full sequence is Guanylate-binding protein 3 (595 aa).

A GTPase domain (Globular) region spans residues 1–309 (MAPEIHMTGP…NAISRGDLPC (309 aa)). One can recognise a GB1/RHD3-type G domain in the interval 35 to 276 (TQPVVVVAIV…FCSYIFSNSK (242 aa)). GTP-binding positions include 45 to 52 (GLYRTGKS), 67 to 69 (LGS), and 97 to 101 (DTEGL). Positions 482–595 (EKEKEIEVEC…KRYMSHKLKI (114 aa)) form a coiled coil.

This sequence belongs to the TRAFAC class dynamin-like GTPase superfamily. GB1/RHD3 GTPase family. GB1 subfamily. Heterodimer with other family members, including GBP1, GBP2 and GBP5. Dimerization regulates subcellular location.

The protein localises to the cytoplasm. Its subcellular location is the perinuclear region. It localises to the golgi apparatus membrane. The enzyme catalyses GTP + H2O = GDP + phosphate + H(+). In terms of biological role, interferon (IFN)-inducible GTPase that plays important roles in innate immunity against a diverse range of bacterial, viral and protozoan pathogens. Hydrolyzes GTP very efficiently; GDP rather than GMP is the major reaction product. Following infection, recruited to the pathogen-containing vacuoles or vacuole-escaped bacteria and acts as a positive regulator of inflammasome assembly by promoting the release of inflammasome ligands from bacteria. Acts by promoting lysis of pathogen-containing vacuoles, releasing pathogens into the cytosol. Following pathogen release in the cytosol, promotes recruitment of proteins that mediate bacterial cytolysis: this liberates ligands that are detected by inflammasomes, such as lipopolysaccharide (LPS) that activates the non-canonical CASP4/CASP11 inflammasome or double-stranded DNA (dsDNA) that activates the AIM2 inflammasome. Exhibits antiviral activity against influenza virus. Its function is as follows. Shows the most prominent antiviral activity in epithelial cells. The polypeptide is Guanylate-binding protein 3 (GBP3) (Homo sapiens (Human)).